The following is an 866-amino-acid chain: FHIP family protein v1g243165 (866 aa).

2 disordered regions span residues 739–761 (RDGP…ASTS) and 781–814 (GSTA…ESQT). Residues 751-761 (SIGSIGSASTS) are compositionally biased toward low complexity.

This sequence belongs to the FHIP family.

The sequence is that of FHIP family protein v1g243165 from Nematostella vectensis (Starlet sea anemone).